The sequence spans 122 residues: Large ribosomal subunit protein uL14 (122 aa).

Belongs to the universal ribosomal protein uL14 family. As to quaternary structure, part of the 50S ribosomal subunit. Forms a cluster with proteins L3 and L19. In the 70S ribosome, L14 and L19 interact and together make contacts with the 16S rRNA in bridges B5 and B8.

In terms of biological role, binds to 23S rRNA. Forms part of two intersubunit bridges in the 70S ribosome. This is Large ribosomal subunit protein uL14 from Hahella chejuensis (strain KCTC 2396).